The primary structure comprises 524 residues: Phosphoenolpyruvate carboxykinase (ATP) (524 aa).

Residues arginine 52, tyrosine 188, and lysine 194 each contribute to the substrate site. Residues lysine 194, histidine 213, and 229 to 237 (GLSGTGKTT) each bind ATP. Lysine 194 and histidine 213 together coordinate Mn(2+). A Mn(2+)-binding site is contributed by aspartate 250. 3 residues coordinate ATP: glutamate 278, arginine 314, and threonine 439. Arginine 314 serves as a coordination point for substrate.

It belongs to the phosphoenolpyruvate carboxykinase (ATP) family. It depends on Mn(2+) as a cofactor.

It localises to the cytoplasm. It carries out the reaction oxaloacetate + ATP = phosphoenolpyruvate + ADP + CO2. The protein operates within carbohydrate biosynthesis; gluconeogenesis. Its function is as follows. Involved in the gluconeogenesis. Catalyzes the conversion of oxaloacetate (OAA) to phosphoenolpyruvate (PEP) through direct phosphoryl transfer between the nucleoside triphosphate and OAA. The polypeptide is Phosphoenolpyruvate carboxykinase (ATP) (Campylobacter lari (strain RM2100 / D67 / ATCC BAA-1060)).